The following is a 169-amino-acid chain: Large ribosomal subunit protein uL10 (169 aa).

This sequence belongs to the universal ribosomal protein uL10 family. In terms of assembly, part of the ribosomal stalk of the 50S ribosomal subunit. The N-terminus interacts with L11 and the large rRNA to form the base of the stalk. The C-terminus forms an elongated spine to which L12 dimers bind in a sequential fashion forming a multimeric L10(L12)X complex.

Forms part of the ribosomal stalk, playing a central role in the interaction of the ribosome with GTP-bound translation factors. This chain is Large ribosomal subunit protein uL10, found in Rickettsia massiliae (strain Mtu5).